A 217-amino-acid polypeptide reads, in one-letter code: tRNA (guanine-N(7)-)-methyltransferase (217 aa).

S-adenosyl-L-methionine contacts are provided by E43, D68, N101, and N123. K127 is a binding site for substrate. An interaction with RNA region spans residues 129 to 134 (RHNKRR). Substrate contacts are provided by residues D159 and 196-199 (TEYE).

Belongs to the class I-like SAM-binding methyltransferase superfamily. TrmB family.

The catalysed reaction is guanosine(46) in tRNA + S-adenosyl-L-methionine = N(7)-methylguanosine(46) in tRNA + S-adenosyl-L-homocysteine. It functions in the pathway tRNA modification; N(7)-methylguanine-tRNA biosynthesis. Catalyzes the formation of N(7)-methylguanine at position 46 (m7G46) in tRNA. This is tRNA (guanine-N(7)-)-methyltransferase from Clostridium botulinum (strain Loch Maree / Type A3).